A 347-amino-acid polypeptide reads, in one-letter code: Probable dual-specificity RNA methyltransferase RlmN (347 aa).

Residue glutamate 94 is the Proton acceptor of the active site. Positions 100–334 (TETRTTACVS…AKVRHSRGKD (235 aa)) constitute a Radical SAM core domain. Cysteines 107 and 339 form a disulfide. [4Fe-4S] cluster contacts are provided by cysteine 114, cysteine 118, and cysteine 121. Residues 165 to 166 (GE), serine 197, 220 to 222 (SLH), and asparagine 296 contribute to the S-adenosyl-L-methionine site. Cysteine 339 acts as the S-methylcysteine intermediate in catalysis.

Belongs to the radical SAM superfamily. RlmN family. It depends on [4Fe-4S] cluster as a cofactor.

The protein resides in the cytoplasm. It catalyses the reaction adenosine(2503) in 23S rRNA + 2 reduced [2Fe-2S]-[ferredoxin] + 2 S-adenosyl-L-methionine = 2-methyladenosine(2503) in 23S rRNA + 5'-deoxyadenosine + L-methionine + 2 oxidized [2Fe-2S]-[ferredoxin] + S-adenosyl-L-homocysteine. It carries out the reaction adenosine(37) in tRNA + 2 reduced [2Fe-2S]-[ferredoxin] + 2 S-adenosyl-L-methionine = 2-methyladenosine(37) in tRNA + 5'-deoxyadenosine + L-methionine + 2 oxidized [2Fe-2S]-[ferredoxin] + S-adenosyl-L-homocysteine. Functionally, specifically methylates position 2 of adenine 2503 in 23S rRNA and position 2 of adenine 37 in tRNAs. This Flavobacterium psychrophilum (strain ATCC 49511 / DSM 21280 / CIP 103535 / JIP02/86) protein is Probable dual-specificity RNA methyltransferase RlmN.